Reading from the N-terminus, the 612-residue chain is Actin-binding LIM protein 2 (612 aa).

4 consecutive LIM zinc-binding domains span residues 22–81 (ILCN…LYGT), 81–141 (TRCF…TLLG), 151–210 (RSCG…KFGI), and 210–270 (IRCD…ARTE). 8 residues coordinate Zn(2+): Cys83, Cys86, His103, Cys106, Cys109, Cys112, Cys131, and Cys134. Cys212, Cys215, His232, Cys235, Cys238, Cys241, His260, and Cys263 together coordinate Zn(2+). Over residues 269–278 (TEDKSKETRT) the composition is skewed to basic and acidic residues. 2 disordered regions span residues 269 to 295 (TEDK…SGSP) and 341 to 433 (AVGD…DNIY). Over residues 279–295 (SSESIVSVPASSTSGSP) the composition is skewed to low complexity. A phosphoserine mark is found at Ser282, Ser294, Gly351, Arg356, Ser365, and Ser368. Residues 364 to 373 (SSPSSAGSVS) show a composition bias toward low complexity. A compositionally biased stretch (polar residues) spans 394 to 416 (SGRSTPSLSVHSDSRPPSSTYQQ). Ser453 carries the phosphoserine modification. The segment at 471-498 (ADTRTNSPDLDSQSLSLSSGTDQEPLQR) is disordered. Phosphothreonine is present on Thr473. Phosphoserine occurs at positions 477 and 579. The span at 477–489 (SPDLDSQSLSLSS) shows a compositional bias: low complexity. The HP domain maps to 544-612 (TREYKIYPYD…NDLKKKALLF (69 aa)).

As to quaternary structure, interacts with F-actin and ABRA. In terms of tissue distribution, expressed in brain. Highly expressed in caudate/putamen, moderately expressed in the olfactory bulb. In the hippocampus, expressed in the CA1, CA2 and CA3 fields. In the cerebellum, expressed in Purkinje cells.

It is found in the cytoplasm. May act as scaffold protein. May stimulate ABRA activity and ABRA-dependent SRF transcriptional activity. The chain is Actin-binding LIM protein 2 (Ablim2) from Mus musculus (Mouse).